The primary structure comprises 237 residues: Phosphoserine phosphatase (237 aa).

Asp-39 (nucleophile) is an active-site residue. Mg(2+) contacts are provided by Asp-39 and Glu-41. Glu-41 serves as the catalytic Proton donor. Substrate contacts are provided by residues Glu-47, Arg-78, 122-123 (SD), and Lys-165. Asp-184 lines the Mg(2+) pocket. Asn-187 serves as a coordination point for substrate.

This sequence belongs to the thrH family. Requires Mg(2+) as cofactor.

It catalyses the reaction O-phospho-L-serine + H2O = L-serine + phosphate. It carries out the reaction O-phospho-D-serine + H2O = D-serine + phosphate. Its pathway is amino-acid biosynthesis; L-serine biosynthesis; L-serine from 3-phospho-D-glycerate: step 3/3. Phosphoserine phosphatase that mediates dephosphorylation of phosphoserine in the serine biosynthesis pathway. Also able to dephosphorylate phospho-threonine. The chain is Phosphoserine phosphatase from Pseudomonas syringae pv. tomato (strain ATCC BAA-871 / DC3000).